Consider the following 228-residue polypeptide: Lipoprotein-releasing system ATP-binding protein LolD (228 aa).

One can recognise an ABC transporter domain in the interval 6-228 (LRCKELSKSY…KNGILHKEQG (223 aa)). 42-49 (GASGSGKS) is a binding site for ATP.

Belongs to the ABC transporter superfamily. Lipoprotein translocase (TC 3.A.1.125) family. As to quaternary structure, the complex is composed of two ATP-binding proteins (LolD) and two transmembrane proteins (LolC and LolE).

The protein localises to the cell inner membrane. In terms of biological role, part of the ABC transporter complex LolCDE involved in the translocation of mature outer membrane-directed lipoproteins, from the inner membrane to the periplasmic chaperone, LolA. Responsible for the formation of the LolA-lipoprotein complex in an ATP-dependent manner. This is Lipoprotein-releasing system ATP-binding protein LolD from Idiomarina loihiensis (strain ATCC BAA-735 / DSM 15497 / L2-TR).